Reading from the N-terminus, the 407-residue chain is Imidazolonepropionase (407 aa).

Positions 68 and 70 each coordinate Fe(3+). Zn(2+) contacts are provided by histidine 68 and histidine 70. The 4-imidazolone-5-propanoate site is built by arginine 77, tyrosine 140, and histidine 173. N-formimidoyl-L-glutamate is bound at residue tyrosine 140. A Fe(3+)-binding site is contributed by histidine 238. Residue histidine 238 participates in Zn(2+) binding. Glutamine 241 contributes to the 4-imidazolone-5-propanoate binding site. Aspartate 313 contacts Fe(3+). Aspartate 313 contributes to the Zn(2+) binding site. N-formimidoyl-L-glutamate is bound by residues asparagine 315 and glycine 317. Threonine 318 serves as a coordination point for 4-imidazolone-5-propanoate.

This sequence belongs to the metallo-dependent hydrolases superfamily. HutI family. Zn(2+) serves as cofactor. Fe(3+) is required as a cofactor.

Its subcellular location is the cytoplasm. It carries out the reaction 4-imidazolone-5-propanoate + H2O = N-formimidoyl-L-glutamate. The protein operates within amino-acid degradation; L-histidine degradation into L-glutamate; N-formimidoyl-L-glutamate from L-histidine: step 3/3. Its function is as follows. Catalyzes the hydrolytic cleavage of the carbon-nitrogen bond in imidazolone-5-propanoate to yield N-formimidoyl-L-glutamate. It is the third step in the universal histidine degradation pathway. This chain is Imidazolonepropionase, found in Burkholderia pseudomallei (strain 668).